Consider the following 530-residue polypeptide: Glutamate--tRNA ligase (530 aa).

The short motif at 26-36 (PSPTGKAHIGT) is the 'HIGH' region element. Residues 267-271 (KLSKR) carry the 'KMSKS' region motif. K270 lines the ATP pocket.

The protein belongs to the class-I aminoacyl-tRNA synthetase family. Glutamate--tRNA ligase type 1 subfamily. As to quaternary structure, monomer.

Its subcellular location is the cytoplasm. The catalysed reaction is tRNA(Glu) + L-glutamate + ATP = L-glutamyl-tRNA(Glu) + AMP + diphosphate. Catalyzes the attachment of glutamate to tRNA(Glu) in a two-step reaction: glutamate is first activated by ATP to form Glu-AMP and then transferred to the acceptor end of tRNA(Glu). The polypeptide is Glutamate--tRNA ligase (Gloeobacter violaceus (strain ATCC 29082 / PCC 7421)).